We begin with the raw amino-acid sequence, 312 residues long: Ribonuclease Z (312 aa).

Residues His-63, His-65, Asp-67, His-68, His-141, Asp-212, and His-270 each coordinate Zn(2+). Asp-67 acts as the Proton acceptor in catalysis.

This sequence belongs to the RNase Z family. Homodimer. Zn(2+) is required as a cofactor.

It catalyses the reaction Endonucleolytic cleavage of RNA, removing extra 3' nucleotides from tRNA precursor, generating 3' termini of tRNAs. A 3'-hydroxy group is left at the tRNA terminus and a 5'-phosphoryl group is left at the trailer molecule.. Its function is as follows. Zinc phosphodiesterase, which displays some tRNA 3'-processing endonuclease activity. Probably involved in tRNA maturation, by removing a 3'-trailer from precursor tRNA. The sequence is that of Ribonuclease Z from Lactobacillus acidophilus (strain ATCC 700396 / NCK56 / N2 / NCFM).